The following is a 53-amino-acid chain: Large ribosomal subunit protein eL40 (53 aa).

It belongs to the eukaryotic ribosomal protein eL40 family.

This is Large ribosomal subunit protein eL40 from Pyrobaculum aerophilum (strain ATCC 51768 / DSM 7523 / JCM 9630 / CIP 104966 / NBRC 100827 / IM2).